The sequence spans 321 residues: Nitrilase blr3397 (321 aa).

The CN hydrolase domain maps to 10 to 277 (YKAAVVQAAS…ETILYADIAL (268 aa)). The Proton acceptor role is filled by Glu50. The active-site Proton donor is the Lys137. Cys171 acts as the Nucleophile in catalysis.

It belongs to the carbon-nitrogen hydrolase superfamily. Nitrilase family. As to quaternary structure, homodecamer.

It carries out the reaction an aliphatic nitrile + 2 H2O = a carboxylate + NH4(+). Nitrilase that acts on various kinds of nitrile compounds such as aliphatic and aromatic nitriles. Has higher activity toward aliphatic nitriles compared to aromatic nitriles. Among the different substrates tested, has the highest activity toward hydrocinnamonitrile. This chain is Nitrilase blr3397, found in Bradyrhizobium diazoefficiens (strain JCM 10833 / BCRC 13528 / IAM 13628 / NBRC 14792 / USDA 110).